A 121-amino-acid polypeptide reads, in one-letter code: Methylglyoxal synthase (121 aa).

The 121-residue stretch at 1-121 (MMKVALIAHD…SAELFLRALN (121 aa)) folds into the MGS-like domain. Substrate contacts are provided by residues H9, K13, 35-38 (TGTT), and 55-56 (SG). The active-site Proton donor/acceptor is the D61. H88 provides a ligand contact to substrate.

The protein belongs to the methylglyoxal synthase family.

The catalysed reaction is dihydroxyacetone phosphate = methylglyoxal + phosphate. In terms of biological role, catalyzes the formation of methylglyoxal from dihydroxyacetone phosphate. The protein is Methylglyoxal synthase of Carboxydothermus hydrogenoformans (strain ATCC BAA-161 / DSM 6008 / Z-2901).